The chain runs to 139 residues: Transcription antitermination protein NusB (139 aa).

The protein belongs to the NusB family.

Its function is as follows. Involved in transcription antitermination. Required for transcription of ribosomal RNA (rRNA) genes. Binds specifically to the boxA antiterminator sequence of the ribosomal RNA (rrn) operons. This is Transcription antitermination protein NusB from Baumannia cicadellinicola subsp. Homalodisca coagulata.